We begin with the raw amino-acid sequence, 481 residues long: uncharacterized protein (481 aa).

A helical transmembrane segment spans residues 18 to 38 (FMIVTAIAVAIFVVITGVVIF).

The protein localises to the cell inner membrane. Its function is as follows. Involved in DNA conjugation in the recipient strain. This is an uncharacterized protein from Mycolicibacterium smegmatis (strain MKD8) (Mycobacterium smegmatis).